A 345-amino-acid chain; its full sequence is rRNA 2'-O-methyltransferase fibrillarin (345 aa).

Positions 1 to 114 are disordered; that stretch reads MGKPGFSPRG…GFKGGKTVTI (114 aa). The span at 8–108 shows a compositional bias: gly residues; that stretch reads PRGGGGGGGG…RGGGAGGFKG (101 aa). Residues Arg-9, Arg-23, Arg-25, Arg-41, Arg-43, Arg-49, Arg-52, Arg-59, Arg-64, Arg-72, Arg-78, Arg-84, Arg-89, Arg-94, and Arg-99 each carry the asymmetric dimethylarginine modification. Residues 198 to 199, 217 to 218, 242 to 243, and 262 to 265 contribute to the S-adenosyl-L-methionine site; these read TT, EF, DA, and DVAQ.

It belongs to the methyltransferase superfamily. Fibrillarin family. In terms of assembly, component of box C/D small nucleolar ribonucleoprotein (snoRNP) particles. It is associated with the U3, U8 and U13 small nuclear RNAs. Post-translationally, by homology to other fibrillarins, some or all of the N-terminal domain arginines are modified to asymmetric dimethylarginine (DMA).

It localises to the nucleus. It is found in the nucleolus. It carries out the reaction L-glutaminyl-[histone H2A] + S-adenosyl-L-methionine = N(5)-methyl-L-glutaminyl-[histone H2A] + S-adenosyl-L-homocysteine + H(+). In terms of biological role, S-adenosyl-L-methionine-dependent methyltransferase that has the ability to methylate both RNAs and proteins. Involved in pre-rRNA processing. Utilizes the methyl donor S-adenosyl-L-methionine to catalyze the site-specific 2'-hydroxyl methylation of ribose moieties in pre-ribosomal RNA. Site specificity is provided by a guide RNA that base pairs with the substrate. Methylation occurs at a characteristic distance from the sequence involved in base pairing with the guide RNA. Also acts as a protein methyltransferase by mediating methylation of 'Gln-105' of histone H2A (H2AQ105me), a modification that impairs binding of the FACT complex and is specifically present at 35S ribosomal DNA locus. The chain is rRNA 2'-O-methyltransferase fibrillarin from Drosophila erecta (Fruit fly).